A 55-amino-acid chain; its full sequence is Large ribosomal subunit protein bL33 (55 aa).

Belongs to the bacterial ribosomal protein bL33 family.

This is Large ribosomal subunit protein bL33 from Renibacterium salmoninarum (strain ATCC 33209 / DSM 20767 / JCM 11484 / NBRC 15589 / NCIMB 2235).